The following is a 119-amino-acid chain: uncharacterized protein (119 aa).

Residues 80-104 (VFPLVYLFCVVFQFLSLGCYLSIFF) traverse the membrane as a helical segment.

It is found in the membrane. This is an uncharacterized protein from Saccharomyces cerevisiae (strain ATCC 204508 / S288c) (Baker's yeast).